The following is a 246-amino-acid chain: MATPQTGKKTPSRRVSELPDGPPDATGLTPRQQRVLAHIKDSIEKRGYPPSMREIGEAVGLTSSSSVAHQLKTLEEKGFLKRDPHRPRALEVFLPEVMAARRSMSAAEESSFDETGVGDALPAAQYVPVVGRIAAGGPILAEERVEDVFPLPRQLVGDGQLFLLEVRGDSMIEAAICDGDYVAIRQQPTAENGEIVAAMIDGEATVKTFQRKDGNVWLLPHNPAYDPIDGTHATILGKVTAVLRRV.

A disordered region spans residues 1–34 (MATPQTGKKTPSRRVSELPDGPPDATGLTPRQQR). The H-T-H motif DNA-binding region spans 52 to 72 (MREIGEAVGLTSSSSVAHQLK). Catalysis depends on for autocatalytic cleavage activity residues S170 and K207.

The protein belongs to the peptidase S24 family. As to quaternary structure, homodimer.

It catalyses the reaction Hydrolysis of Ala-|-Gly bond in repressor LexA.. Its function is as follows. Represses a number of genes involved in the response to DNA damage (SOS response), including recA and lexA. In the presence of single-stranded DNA, RecA interacts with LexA causing an autocatalytic cleavage which disrupts the DNA-binding part of LexA, leading to derepression of the SOS regulon and eventually DNA repair. The protein is LexA repressor of Nocardioides sp. (strain ATCC BAA-499 / JS614).